A 128-amino-acid chain; its full sequence is Cytochrome c-type biogenesis protein CcmE (128 aa).

The Cytoplasmic segment spans residues 1–8 (MQKRVRNR). A helical; Signal-anchor for type II membrane protein membrane pass occupies residues 9–29 (LITIIICFCSACLGISIILYN). Residues 30-128 (LEKNIVFFLP…KHDENYRPPQ (99 aa)) are Periplasmic-facing. Residues His120 and Tyr124 each coordinate heme.

Belongs to the CcmE/CycJ family.

It localises to the cell inner membrane. In terms of biological role, heme chaperone required for the biogenesis of c-type cytochromes. Transiently binds heme delivered by CcmC and transfers the heme to apo-cytochromes in a process facilitated by CcmF and CcmH. This chain is Cytochrome c-type biogenesis protein CcmE, found in Rickettsia conorii (strain ATCC VR-613 / Malish 7).